The sequence spans 167 residues: Ribosome maturation factor RimM (167 aa).

One can recognise a PRC barrel domain in the interval 92–166; it reads DDEFYHADLI…RIVADPPEEQ (75 aa).

This sequence belongs to the RimM family. In terms of assembly, binds ribosomal protein uS19.

The protein localises to the cytoplasm. Its function is as follows. An accessory protein needed during the final step in the assembly of 30S ribosomal subunit, possibly for assembly of the head region. Essential for efficient processing of 16S rRNA. May be needed both before and after RbfA during the maturation of 16S rRNA. It has affinity for free ribosomal 30S subunits but not for 70S ribosomes. This is Ribosome maturation factor RimM from Paracoccus denitrificans (strain Pd 1222).